The sequence spans 558 residues: MAYKSDIEIAREAKKRPIQEIGEKIGIGSDDLLPYGHDKAKVSQSFINSVQDKPNGRLVLVTAINPTPAGEGKTTTTVGLGDGLNHIGKNAMICIREASLGPNFGMKGGAAGGGYAQVVPMEDMNLHFTGDFHAITSAHSLLSAMIDNHIYWGNEAEIDVRRVQWRRVVDMNDRALRQITASLGGVANGFPREAGFDITVASEVMAILCLAKDLKDLEKRLGDMIVAYRRDRSPVFCRDIKAQGAMTVLLKDAMQPNLVQTLENNPAFVHGGPFANIAHGCNSVIATTTALKLADYVVTEAGFGADLGAEKFMNIKCRKAGIAPSVVVCVATVRAMKMNGGVAKADLGAENVDAVKKGCPNLGRHIENLKSFGVPVIVAINHFVTDTDAEVEAIKSYVSEHGAEAVLSRHWELGSEGSADLARKVVEVAEKDSANFAPIYPDDMPLAEKVQTIAKRIYRADEALMDKKVRDQLKLWEEQGYGHLPVCMAKTQYSFSTDPNLRGAPTGHSVPVREVRLSAGAGFVVVVCGEIMTMPGLPRVPSAENIHLNEDGQIEGLF.

67 to 74 (TPAGEGKT) serves as a coordination point for ATP.

This sequence belongs to the formate--tetrahydrofolate ligase family.

The enzyme catalyses (6S)-5,6,7,8-tetrahydrofolate + formate + ATP = (6R)-10-formyltetrahydrofolate + ADP + phosphate. It participates in one-carbon metabolism; tetrahydrofolate interconversion. In Roseobacter denitrificans (strain ATCC 33942 / OCh 114) (Erythrobacter sp. (strain OCh 114)), this protein is Formate--tetrahydrofolate ligase.